Here is a 475-residue protein sequence, read N- to C-terminus: L-seryl-tRNA(Sec) selenium transferase (475 aa).

The residue at position 295 (Lys-295) is an N6-(pyridoxal phosphate)lysine.

The protein belongs to the SelA family. Pyridoxal 5'-phosphate is required as a cofactor.

The protein localises to the cytoplasm. The enzyme catalyses L-seryl-tRNA(Sec) + selenophosphate + H(+) = L-selenocysteinyl-tRNA(Sec) + phosphate. It functions in the pathway aminoacyl-tRNA biosynthesis; selenocysteinyl-tRNA(Sec) biosynthesis; selenocysteinyl-tRNA(Sec) from L-seryl-tRNA(Sec) (bacterial route): step 1/1. Its function is as follows. Converts seryl-tRNA(Sec) to selenocysteinyl-tRNA(Sec) required for selenoprotein biosynthesis. This Desulfovibrio desulfuricans (strain ATCC 27774 / DSM 6949 / MB) protein is L-seryl-tRNA(Sec) selenium transferase.